The following is a 288-amino-acid chain: HTH-type transcriptional regulator CzcR (288 aa).

Positions Met-1–Thr-58 constitute an HTH lysR-type domain. The H-T-H motif DNA-binding region spans Val-18–Lys-37.

The protein belongs to the LysR transcriptional regulatory family.

The chain is HTH-type transcriptional regulator CzcR (czcR) from Bacillus anthracis.